A 358-amino-acid chain; its full sequence is MALTRLVIRDFRNIEEADLALAPGFNFLVGANGSGKTSVLEAIYTLGHGRAFRSLQAGRVIRHDCSAFVLHGRIDDGGGRERAVGLSKDRQGDSKVRIDGSDGHKVAELAQMLPMQLITPEGFTLLNGGPKYRRAFLDWGCFHGERSFFTAWNNLRRVLKQRNAALRQVTRYAQIRPWDQELVPLAEQVSALRAAYSEAIAQDIAATCSQFLPEYALSFSFMRGWDRESDYAALLERHFERDRALTYTAQGPHKADFRIRADGTPVEDLLSRGQLKLLMCALRLAQGEYLTRHSGRQCLYLIDDFASELDAGRRRLLAERLKSTGAQVFVSAVNADQIGDMVDEKGKMFHVEQGKIAV.

30-37 contributes to the ATP binding site; sequence GANGSGKT.

It belongs to the RecF family.

The protein resides in the cytoplasm. Functionally, the RecF protein is involved in DNA metabolism; it is required for DNA replication and normal SOS inducibility. RecF binds preferentially to single-stranded, linear DNA. It also seems to bind ATP. The polypeptide is DNA replication and repair protein RecF (Edwardsiella ictaluri (strain 93-146)).